A 1108-amino-acid chain; its full sequence is Probable E3 ubiquitin ligase SUD1 (1108 aa).

The disordered stretch occupies residues 1 to 60 (MEISPADSLSISGAAASEVVSEPSVSSSSSSSSPNQASPNPFSNMDPAVSTATGSRYVDD). Positions 10 to 44 (SISGAAASEVVSEPSVSSSSSSSSPNQASPNPFSN) are enriched in low complexity. The segment at 60–121 (DDEDEEDVCR…EVCKHPFSFS (62 aa)) adopts an RING-CH-type zinc-finger fold. Positions 68, 71, 85, 87, 95, 98, 111, and 114 each coordinate Zn(2+). 2 helical membrane-spanning segments follow: residues 157–177 (FVLSVWLLTIPFITFWIWRLA) and 197–217 (VILTDCLHGFLLSASIVFIFL). Residues 237 to 246 (ERDDDVDRNG) show a composition bias toward basic and acidic residues. The segment at 237-273 (ERDDDVDRNGARAARRPAGQANRNLAGEGNGEDAGDQ) is disordered. The stretch at 286–308 (ENVLARLDIQAARLEAQVEQMFD) forms a coiled coil. Helical transmembrane passes span 339–359 (FTVLASNMIFLGVVIFVPFTL), 362–382 (IILYHVSWLFAAARGPAVAAS), 462–482 (AVGYMFIVFLVFLYLGIIALI), 489–509 (PLTVGRFYGIASIVEAVPSLL), 525–545 (VAFLLVIELGVFPLMCGWWLD), 572–592 (LVHWVVGIMYMLQISIFVSLL), 630–650 (VLLSVAVYGSLIVMLVFLPVK), and 669–689 (PFTEIPADMLLFQICIPFIIE). The interval 762-784 (PNRSRLRAGNVNTGEEYEDDDEQ) is disordered. 6 helical membrane-spanning segments follow: residues 796 to 816 (IILLLLVAWVTLLLFNSALIV), 844 to 864 (YAFVIGTYAFWTTISGARYAI), 894 to 914 (AIWVFIIPVLIGLLFELLVIV), 923 to 943 (SPVFLLYQDWALGLIFLKIWT), 982 to 1002 (EIVFPIVMKLLTALCVPYVLA), and 1017 to 1036 (SAVYRFAWIGCLSVSLFCFC).

Expressed in cotyledons, leaves, roots, stems, inflorescences and siliques. Expression higher at the top than at the base of the stem.

The protein localises to the membrane. It carries out the reaction S-ubiquitinyl-[E2 ubiquitin-conjugating enzyme]-L-cysteine + [acceptor protein]-L-lysine = [E2 ubiquitin-conjugating enzyme]-L-cysteine + N(6)-ubiquitinyl-[acceptor protein]-L-lysine.. The protein operates within protein modification; protein ubiquitination. Functionally, probable E3 ubiquitin ligase acting as a positive post-transcriptional regulator of 3-hydroxy-3-methylglutaryl-coenzyme A reductase activity. Might be involved in the quality control that degrades misfolded proteins. The polypeptide is Probable E3 ubiquitin ligase SUD1 (SUD1) (Arabidopsis thaliana (Mouse-ear cress)).